The chain runs to 323 residues: Estradiol 17 beta-dehydrogenase 5 (323 aa).

NADP(+) contacts are provided by residues 20 to 24 (GFGTY) and Asp-50. The active-site Proton donor is Tyr-55. His-117 contacts substrate. Residues 166 to 167 (SN), Gln-190, 216 to 221 (YSALGS), and 270 to 280 (KSFSEKRIKEN) each bind NADP(+).

It belongs to the aldo/keto reductase family. As to quaternary structure, monomer. Three forms are detected, probably due to post-translational modifications. Mainly found in liver. Also expressed weakly in kidney.

In terms of biological role, active toward androgens, estrogens, and xenobiotic substrates. Also exhibits low 20 alpha-HSD activity. Shows a-stereospecificity in hydrogen transfer between cofactors and substrates (A-specific). Preferentially catalyzes the reduction of 4-androstenedione, 5-alpha-androstane-3,17-dione, androsterone and dehydroepiandrosterone to testosterone, dihydrotestosterone, 5-alpha-androstane-3-alpha,17-beta-diol and 5-androstene-3-beta,17-beta-diol, respectively. This is Estradiol 17 beta-dehydrogenase 5 (Akr1c6) from Mus musculus (Mouse).